Consider the following 617-residue polypeptide: Dihydroxy-acid dehydratase (617 aa).

Asp-81 contributes to the Mg(2+) binding site. Cys-122 provides a ligand contact to [2Fe-2S] cluster. Mg(2+) contacts are provided by Asp-123 and Lys-124. Lys-124 carries the N6-carboxylysine modification. Residue Cys-195 participates in [2Fe-2S] cluster binding. Glu-491 lines the Mg(2+) pocket. The Proton acceptor role is filled by Ser-517.

This sequence belongs to the IlvD/Edd family. As to quaternary structure, homodimer. It depends on [2Fe-2S] cluster as a cofactor. Requires Mg(2+) as cofactor.

It catalyses the reaction (2R)-2,3-dihydroxy-3-methylbutanoate = 3-methyl-2-oxobutanoate + H2O. The catalysed reaction is (2R,3R)-2,3-dihydroxy-3-methylpentanoate = (S)-3-methyl-2-oxopentanoate + H2O. The protein operates within amino-acid biosynthesis; L-isoleucine biosynthesis; L-isoleucine from 2-oxobutanoate: step 3/4. It participates in amino-acid biosynthesis; L-valine biosynthesis; L-valine from pyruvate: step 3/4. In terms of biological role, functions in the biosynthesis of branched-chain amino acids. Catalyzes the dehydration of (2R,3R)-2,3-dihydroxy-3-methylpentanoate (2,3-dihydroxy-3-methylvalerate) into 2-oxo-3-methylpentanoate (2-oxo-3-methylvalerate) and of (2R)-2,3-dihydroxy-3-methylbutanoate (2,3-dihydroxyisovalerate) into 2-oxo-3-methylbutanoate (2-oxoisovalerate), the penultimate precursor to L-isoleucine and L-valine, respectively. The protein is Dihydroxy-acid dehydratase of Buchnera aphidicola subsp. Diuraphis noxia.